The chain runs to 1986 residues: Protein Shroom3 (1986 aa).

Residues 1–21 form a disordered region; that stretch reads MKTPENLEEPSATPNPSRTPT. The PDZ domain occupies 24 to 109; it reads FVYLEALLEG…TLRLVVRRDV (86 aa). Disordered stretches follow at residues 152–199, 211–239, 265–285, 342–463, and 564–1055; these read CSEP…SSTS, RSPD…LLSP, TSSS…RSGS, QGCA…QPLL, and NEDS…RRIF. Ser-212 is modified (phosphoserine). Polar residues-rich tracts occupy residues 357-376 and 415-425; these read PSPS…TDNL and PQTNSSGSQKT. Residues 430–440 are compositionally biased toward basic and acidic residues; it reads DQLHTVPERSP. Phosphoserine is present on residues Ser-439 and Ser-443. The span at 595–607 shows a compositional bias: polar residues; the sequence is ACSNHHSLSSPQA. Over residues 630–645 the composition is skewed to basic and acidic residues; it reads QEDHNANLRQKVEREG. Over residues 653-677 the composition is skewed to polar residues; the sequence is NSGRTRSAFSSLQNIPESLRRQSNV. Positions 747-761 are enriched in low complexity; it reads SGASQRRLSSSSSAA. A compositionally biased stretch (basic and acidic residues) spans 774–785; sequence KVSRIEEREQGR. Low complexity-rich tracts occupy residues 796–814 and 865–874; these read YGPG…TSSS and DGRGPPARGG. Ser-888 carries the phosphoserine modification. Over residues 895–908 the composition is skewed to basic and acidic residues; that stretch reads EAEREASWSEDRPG. Thr-909 carries the phosphothreonine modification. A phosphoserine mark is found at Ser-912 and Ser-969. Positions 927–1023 constitute an ASD1 domain; it reads IKDAQSRVLG…SEPEKMNEVG (97 aa). Over residues 1004-1020 the composition is skewed to basic and acidic residues; that stretch reads LTVEQKKRSYSEPEKMN. A phosphoserine mark is found at Ser-1063 and Ser-1066. 4 disordered regions span residues 1083-1102, 1107-1223, 1304-1425, and 1446-1654; these read YIQR…PEAG, AQSA…AEDL, ATVA…PPWV, and ANLK…KTSE. Low complexity predominate over residues 1114-1127; sequence AGPAAPDGPGLASA. Over residues 1134 to 1146 the composition is skewed to basic and acidic residues; the sequence is REPEALPRKEHTH. 3 positions are modified to phosphoserine: Trp-1175, Val-1179, and Ser-1219. Residues 1307–1318 are compositionally biased toward low complexity; sequence ASSAPPESSGAA. Phosphoserine occurs at positions 1350 and 1354. The segment covering 1366–1399 has biased composition (polar residues); the sequence is YRSQLAMDQQTGQQPPSSPASAVTQPTSPRSPEL. Low complexity predominate over residues 1455–1469; sequence PSRPSSCSTSDPDTP. The segment covering 1513-1524 has biased composition (pro residues); sequence LPPPPPPSPPSE. Positions 1581–1630 are enriched in polar residues; it reads EGSQIMTATPPQTSAKGSEAESNTPSSASAQPQLNGSPGKQLCPSQTRNL. The segment covering 1634–1654 has biased composition (basic and acidic residues); the sequence is PVERTQDLGKKTHAEPQKTSE. One can recognise an ASD2 domain in the interval 1659 to 1947; it reads EALAKEIVHQ…QVRCLLESLP (289 aa). The stretch at 1844–1890 forms a coiled coil; the sequence is RLARVENVLRGLGEDASKEERSSLNEKRKVLAGQHEDARELKENLDR.

This sequence belongs to the shroom family. As to quaternary structure, interacts with F-actin. Interacts with ROCK1.

The protein localises to the cell junction. It is found in the adherens junction. It localises to the cytoplasm. The protein resides in the cytoskeleton. Its subcellular location is the apical cell membrane. Controls cell shape changes in the neuroepithelium during neural tube closure. Induces apical constriction in epithelial cells by promoting the apical accumulation of F-actin and myosin II, and probably by bundling stress fibers. Induces apicobasal cell elongation by redistributing gamma-tubulin and directing the assembly of robust apicobasal microtubule arrays. The chain is Protein Shroom3 (Shroom3) from Mus musculus (Mouse).